A 160-amino-acid chain; its full sequence is 6,7-dimethyl-8-ribityllumazine synthase (160 aa).

5-amino-6-(D-ribitylamino)uracil contacts are provided by residues W26, 58–60, and 80–82; these read AIE and VVI. 85 to 86 contacts (2S)-2-hydroxy-3-oxobutyl phosphate; sequence ET. Catalysis depends on H88, which acts as the Proton donor. Residue N113 coordinates 5-amino-6-(D-ribitylamino)uracil. R127 lines the (2S)-2-hydroxy-3-oxobutyl phosphate pocket.

This sequence belongs to the DMRL synthase family. As to quaternary structure, homopentamer.

The enzyme catalyses (2S)-2-hydroxy-3-oxobutyl phosphate + 5-amino-6-(D-ribitylamino)uracil = 6,7-dimethyl-8-(1-D-ribityl)lumazine + phosphate + 2 H2O + H(+). It functions in the pathway cofactor biosynthesis; riboflavin biosynthesis; riboflavin from 2-hydroxy-3-oxobutyl phosphate and 5-amino-6-(D-ribitylamino)uracil: step 1/2. Catalyzes the formation of 6,7-dimethyl-8-ribityllumazine by condensation of 5-amino-6-(D-ribitylamino)uracil with 3,4-dihydroxy-2-butanone 4-phosphate. This is the penultimate step in the biosynthesis of riboflavin. This is 6,7-dimethyl-8-ribityllumazine synthase from Mycobacteroides abscessus (strain ATCC 19977 / DSM 44196 / CCUG 20993 / CIP 104536 / JCM 13569 / NCTC 13031 / TMC 1543 / L948) (Mycobacterium abscessus).